The following is a 366-amino-acid chain: ADP-ribosylarginine hydrolase Tri1 (366 aa).

Residues methionine 1–glutamate 65 are N-terminal extension. The interval glycine 74–phenylalanine 366 is ADP-ribosyl hydrolase domain. Mg(2+)-binding residues include threonine 116, aspartate 117, aspartate 118, aspartate 161, and aspartate 317.

It belongs to the ADP-ribosylglycohydrolase family. As to quaternary structure, forms a stable complex with cognate effector protein Tre1-Sp. Mg(2+) is required as a cofactor.

The catalysed reaction is N(omega)-(ADP-D-ribosyl)-L-arginyl-[protein] + H2O = ADP-D-ribose + L-arginyl-[protein]. Its function is as follows. Immunity component of a contact-dependent interbacterial competition system (also called effector-immunity systems). Acts as an arginine mono-ADP-ribosylhydrolase, mediating the removal of mono-ADP-ribose attached to arginine residues on proteins. De-ADP-ribosylates FtsZ, is able to act on other proteins as well. Neutralizes the toxic activity of cognate toxin Tre1-Sp. Expression of this protein alone in E.coli partially protects the cells against competition by wild-type S.proteamaculans. Neutralizes Tre1-Sp both by occluding its active site via its N-terminal extension and by hydrolyzing the ADP-ribosyl moiety from FtsZ; the 2 activities are dissociable by mutagenesis. The chain is ADP-ribosylarginine hydrolase Tri1 from Serratia proteamaculans (strain 568).